The chain runs to 428 residues: Adenylosuccinate synthetase (428 aa).

GTP is bound by residues 12–18 (GDEGKGK) and 40–42 (GHT). Residue aspartate 13 is the Proton acceptor of the active site. Mg(2+)-binding residues include aspartate 13 and glycine 40. IMP contacts are provided by residues 13-16 (DEGK), 38-41 (NAGH), threonine 130, arginine 144, glutamine 225, threonine 240, and arginine 304. The active-site Proton donor is the histidine 41. 300–306 (VTTGRSR) is a substrate binding site. GTP contacts are provided by residues arginine 306, 332-334 (KID), and 414-416 (GVG).

It belongs to the adenylosuccinate synthetase family. As to quaternary structure, homodimer. Requires Mg(2+) as cofactor.

The protein localises to the cytoplasm. The catalysed reaction is IMP + L-aspartate + GTP = N(6)-(1,2-dicarboxyethyl)-AMP + GDP + phosphate + 2 H(+). It participates in purine metabolism; AMP biosynthesis via de novo pathway; AMP from IMP: step 1/2. Functionally, plays an important role in the de novo pathway of purine nucleotide biosynthesis. Catalyzes the first committed step in the biosynthesis of AMP from IMP. The sequence is that of Adenylosuccinate synthetase from Clostridium botulinum (strain Eklund 17B / Type B).